The following is an 802-amino-acid chain: Neuronal PAS domain-containing protein 4 (802 aa).

Residues 1 to 13 (MYRSTKGASKARR) are basic motif; degenerate. A bHLH domain is found at 1–53 (MYRSTKGASKARRDQINAEIRNLKELLPLAEADKVRLSYLHIMSLACIYTRKG). Positions 5–38 (TKGASKARRDQINAEIRNLKELLPLAEADKVRLS) form a coiled coil. The tract at residues 14-53 (DQINAEIRNLKELLPLAEADKVRLSYLHIMSLACIYTRKG) is helix-loop-helix motif. 2 PAS domains span residues 70 to 144 (SAQE…LDAD) and 203 to 275 (PGPG…LAEN). Positions 280–319 (AEMVVRLQAKHGGWTWIYCMLYSDGPEGPITANNYPISDT) constitute a PAC domain. Polar residues-rich tracts occupy residues 472–495 (PSSATFPDPLTSSLQGQLTESSAR), 502–518 (TPCTSTFPDQLLPSTAT), and 527–555 (THEQLTPPSTAFQAHLNSPSQTFPEQLSP). A disordered region spans residues 472-555 (PSSATFPDPL…SQTFPEQLSP (84 aa)). Positions 624–648 (YTEKEQNEIDRLIQQISQLAQGMDR) form a coiled coil.

In terms of assembly, efficient DNA binding requires dimerization with another bHLH protein. Heterodimer; forms a heterodimer with ARNT, ARNT2 or BMAL1. In terms of processing, ubiquitinated, leading to degradation by the proteosome. In terms of tissue distribution, specifically expressed in neurons. Expressed in the lateral nucleus of the amygdala (at protein level).

The protein resides in the nucleus. Functionally, transcription factor expressed in neurons of the brain that regulates the excitatory-inhibitory balance within neural circuits and is required for contextual memory in the hippocampus. Plays a key role in the structural and functional plasticity of neurons. Acts as an early-response transcription factor in both excitatory and inhibitory neurons, where it induces distinct but overlapping sets of late-response genes in these two types of neurons, allowing the synapses that form on inhibitory and excitatory neurons to be modified by neuronal activity in a manner specific to their function within a circuit, thereby facilitating appropriate circuit responses to sensory experience. In excitatory neurons, activates transcription of BDNF, which in turn controls the number of GABA-releasing synapses that form on excitatory neurons, thereby promoting an increased number of inhibitory synapses on excitatory neurons. In inhibitory neurons, regulates a distinct set of target genes that serve to increase excitatory input onto somatostatin neurons, probably resulting in enhanced feedback inhibition within cortical circuits. The excitatory and inhibitory balance in neurons affects a number of processes, such as short-term and long-term memory, acquisition of experience, fear memory, response to stress and social behavior. Acts as a regulator of dendritic spine development in olfactory bulb granule cells in a sensory-experience-dependent manner by regulating expression of MDM2. Efficient DNA binding requires dimerization with another bHLH protein, such as ARNT, ARNT2 or BMAL1. Can activate the CME (CNS midline enhancer) element. The sequence is that of Neuronal PAS domain-containing protein 4 from Rattus norvegicus (Rat).